The following is a 427-amino-acid chain: Serine hydroxymethyltransferase (427 aa).

Residues L122 and 126 to 128 (GHL) each bind (6S)-5,6,7,8-tetrahydrofolate. K231 carries the N6-(pyridoxal phosphate)lysine modification.

It belongs to the SHMT family. In terms of assembly, homodimer. Requires pyridoxal 5'-phosphate as cofactor.

It is found in the cytoplasm. The enzyme catalyses (6R)-5,10-methylene-5,6,7,8-tetrahydrofolate + glycine + H2O = (6S)-5,6,7,8-tetrahydrofolate + L-serine. It functions in the pathway one-carbon metabolism; tetrahydrofolate interconversion. The protein operates within amino-acid biosynthesis; glycine biosynthesis; glycine from L-serine: step 1/1. Catalyzes the reversible interconversion of serine and glycine with tetrahydrofolate (THF) serving as the one-carbon carrier. This reaction serves as the major source of one-carbon groups required for the biosynthesis of purines, thymidylate, methionine, and other important biomolecules. Also exhibits THF-independent aldolase activity toward beta-hydroxyamino acids, producing glycine and aldehydes, via a retro-aldol mechanism. In Acidobacterium capsulatum (strain ATCC 51196 / DSM 11244 / BCRC 80197 / JCM 7670 / NBRC 15755 / NCIMB 13165 / 161), this protein is Serine hydroxymethyltransferase.